A 166-amino-acid polypeptide reads, in one-letter code: Phosphopantetheine adenylyltransferase (166 aa).

Ser-10 is a substrate binding site. ATP-binding positions include 10-11 (SF) and His-18. Residues Lys-42, Ala-79, and Arg-93 each contribute to the substrate site. ATP is bound by residues 94–96 (GLR), Glu-104, and 129–135 (VRPITAT).

This sequence belongs to the bacterial CoaD family. As to quaternary structure, homohexamer. Mg(2+) serves as cofactor.

It localises to the cytoplasm. The enzyme catalyses (R)-4'-phosphopantetheine + ATP + H(+) = 3'-dephospho-CoA + diphosphate. It participates in cofactor biosynthesis; coenzyme A biosynthesis; CoA from (R)-pantothenate: step 4/5. Functionally, reversibly transfers an adenylyl group from ATP to 4'-phosphopantetheine, yielding dephospho-CoA (dPCoA) and pyrophosphate. The protein is Phosphopantetheine adenylyltransferase of Methylobacterium sp. (strain 4-46).